The chain runs to 504 residues: Cytochrome P450 monooxygenase iccC (504 aa).

Residues 7 to 26 (LPWILLYTGFLAIFLSRLFS) form a helical membrane-spanning segment. 4 N-linked (GlcNAc...) asparagine glycosylation sites follow: N134, N312, N365, and N374. C452 contacts heme. An N-linked (GlcNAc...) asparagine glycan is attached at N494.

Belongs to the cytochrome P450 family. Heme serves as cofactor.

It is found in the membrane. The enzyme catalyses (3E,5S)-3-[(2E,4E,8S,10E,12Z)-1-hydroxy-4,8-dimethyltetradeca-2,4,10,12-tetraen-1-ylidene]-5-[(4-hydroxyphenyl)methyl]pyrrolidine-2,4-dione + reduced [NADPH--hemoprotein reductase] + O2 = 3-[(2E,4E,8S,10E,12Z)-4,8-dimethyltetradeca-2,4,10,12-tetraenoyl]-4-hydroxy-5-(4-hydroxyphenyl)-1,2-dihydropyridin-2-one + oxidized [NADPH--hemoprotein reductase] + 2 H2O. Its pathway is mycotoxin biosynthesis. In terms of biological role, cytochrome P450 monooxygenase; part of the gene cluster that mediates the biosynthesis of ilicicolin H, a 4-hydroxy-2-pyridonealkaloid that has potent and broad antifungal activities by inhibiting the mitochondrial respiration chain. IccC catalyzes the ring expansion of the tetramate intermediate to the acyclic 2-pyridone intermediate that contains the trans bis-diene chain. The biosynthesis of ilicicolin H starts with formation of the tetramic acid by the hybrid PKS-NRPS synthetase iccA with the partnering trans-enoyl reductase iccB since iccA lacks a designated enoylreductase (ER) domain. The cytochrome P450 monooxygenase iccC then catalyzes the ring expansion of the tetramate to the acyclic 2-pyridone. The pericyclase iccD further converts the acyclic 2-pyridone into 8-epi-ilicicolin H. Finally, the epimerase iccE converts 8-epi-ilicicolin H into ilicicolin H via epimerization. IccA to iccE are sufficient for ilicicolin H biosynthesis and the roles of the remaining enzymes, iccF, iccG and iccH within the pathway have still to be determined. The protein is Cytochrome P450 monooxygenase iccC of Talaromyces variabilis (Penicillium variabile).